Here is a 51-residue protein sequence, read N- to C-terminus: Large ribosomal subunit protein eL39 (51 aa).

It belongs to the eukaryotic ribosomal protein eL39 family.

The polypeptide is Large ribosomal subunit protein eL39 (Thermococcus gammatolerans (strain DSM 15229 / JCM 11827 / EJ3)).